The following is a 169-amino-acid chain: Peptide methionine sulfoxide reductase MsrA (169 aa).

The active site involves Cys10.

The protein belongs to the MsrA Met sulfoxide reductase family.

The enzyme catalyses L-methionyl-[protein] + [thioredoxin]-disulfide + H2O = L-methionyl-(S)-S-oxide-[protein] + [thioredoxin]-dithiol. It catalyses the reaction [thioredoxin]-disulfide + L-methionine + H2O = L-methionine (S)-S-oxide + [thioredoxin]-dithiol. In terms of biological role, has an important function as a repair enzyme for proteins that have been inactivated by oxidation. Catalyzes the reversible oxidation-reduction of methionine sulfoxide in proteins to methionine. The sequence is that of Peptide methionine sulfoxide reductase MsrA from Streptococcus equi subsp. zooepidemicus (strain MGCS10565).